The following is a 626-amino-acid chain: Endoglucanase 19 (626 aa).

The first 23 residues, 1 to 23 (MGSRTTISILVVLLLGLVQLAIS), serve as a signal peptide directing secretion. The Nucleophile role is filled by Asp79. Residues His412, Asp464, and Glu473 contribute to the active site. The tract at residues 515–536 (APVPQRKPTKPPAASSPSPITI) is disordered. Positions 526–536 (PAASSPSPITI) are enriched in low complexity. N-linked (GlcNAc...) asparagine glycans are attached at residues Asn560 and Asn622.

It belongs to the glycosyl hydrolase 9 (cellulase E) family.

Its subcellular location is the secreted. The enzyme catalyses Endohydrolysis of (1-&gt;4)-beta-D-glucosidic linkages in cellulose, lichenin and cereal beta-D-glucans.. The sequence is that of Endoglucanase 19 from Arabidopsis thaliana (Mouse-ear cress).